Consider the following 2542-residue polypeptide: Probable polyketide synthase 41 (2542 aa).

The region spanning 11–441 (CNKVAIIGIG…GSNCCLIVSS (431 aa)) is the Ketosynthase family 3 (KS3) domain. Active-site for beta-ketoacyl synthase activity residues include Cys-177, His-318, and His-360. The interval 628 to 661 (GIKPSIIVGHSLGEISSSYCSGMIDLDTFCYLIY) is acyl/malonyl transferase. The For acyl/malonyl transferase activity role is filled by Ser-638. Residues 926–1059 (INHLGISNSN…ANFQLFSRGP (134 aa)) form an N-terminal hotdog fold region. In terms of domain architecture, PKS/mFAS DH spans 926-1231 (INHLGISNSN…FKSTTKIKDP (306 aa)). His-959 acts as the Proton acceptor; for dehydratase activity in catalysis. A C-terminal hotdog fold region spans residues 1083–1231 (NLTKLSKQEL…FKSTTKIKDP (149 aa)). Residue Asp-1145 is the Proton donor; for dehydratase activity of the active site. Residues 2459-2537 (NVELTVDQLI…SFIQLVKNSM (79 aa)) enclose the Carrier domain. Ser-2496 carries the O-(pantetheine 4'-phosphoryl)serine modification.

The cofactor is pantetheine 4'-phosphate.

In terms of biological role, probable polyketide synthase. The polypeptide is Probable polyketide synthase 41 (pks41) (Dictyostelium discoideum (Social amoeba)).